A 437-amino-acid chain; its full sequence is Trigger factor (437 aa).

The PPIase FKBP-type domain maps to 174-260 (GDFVQISFEG…VKSLKKKIFP (87 aa)).

Belongs to the FKBP-type PPIase family. Tig subfamily.

It localises to the cytoplasm. The catalysed reaction is [protein]-peptidylproline (omega=180) = [protein]-peptidylproline (omega=0). Involved in protein export. Acts as a chaperone by maintaining the newly synthesized protein in an open conformation. Functions as a peptidyl-prolyl cis-trans isomerase. In Koribacter versatilis (strain Ellin345), this protein is Trigger factor.